We begin with the raw amino-acid sequence, 445 residues long: Tubulin beta chain (445 aa).

8 residues coordinate GTP: Q11, E69, S138, G142, T143, G144, N204, and N226. Residue E69 coordinates Mg(2+).

It belongs to the tubulin family. In terms of assembly, dimer of alpha and beta chains. A typical microtubule is a hollow water-filled tube with an outer diameter of 25 nm and an inner diameter of 15 nM. Alpha-beta heterodimers associate head-to-tail to form protofilaments running lengthwise along the microtubule wall with the beta-tubulin subunit facing the microtubule plus end conferring a structural polarity. Microtubules usually have 13 protofilaments but different protofilament numbers can be found in some organisms and specialized cells. Mg(2+) serves as cofactor.

It localises to the cytoplasm. The protein localises to the cytoskeleton. Tubulin is the major constituent of microtubules, a cylinder consisting of laterally associated linear protofilaments composed of alpha- and beta-tubulin heterodimers. Microtubules grow by the addition of GTP-tubulin dimers to the microtubule end, where a stabilizing cap forms. Below the cap, tubulin dimers are in GDP-bound state, owing to GTPase activity of alpha-tubulin. In Leishmania mexicana, this protein is Tubulin beta chain.